The chain runs to 753 residues: 5-methyltetrahydropteroyltriglutamate--homocysteine methyltransferase (753 aa).

5-methyltetrahydropteroyltri-L-glutamate contacts are provided by residues Arg-17–Lys-20 and Lys-117. L-homocysteine-binding positions include Ile-431–Ser-433 and Glu-484. Residues Ile-431–Ser-433 and Glu-484 each bind L-methionine. 5-methyltetrahydropteroyltri-L-glutamate contacts are provided by residues Arg-515–Cys-516 and Trp-561. Position 599 (Asp-599) interacts with L-homocysteine. Residue Asp-599 coordinates L-methionine. Position 605 (Glu-605) interacts with 5-methyltetrahydropteroyltri-L-glutamate. Zn(2+) is bound by residues His-641, Cys-643, and Glu-665. The active-site Proton donor is the His-694. A Zn(2+)-binding site is contributed by Cys-726.

Belongs to the vitamin-B12 independent methionine synthase family. Zn(2+) is required as a cofactor.

It carries out the reaction 5-methyltetrahydropteroyltri-L-glutamate + L-homocysteine = tetrahydropteroyltri-L-glutamate + L-methionine. It functions in the pathway amino-acid biosynthesis; L-methionine biosynthesis via de novo pathway; L-methionine from L-homocysteine (MetE route): step 1/1. Its function is as follows. Catalyzes the transfer of a methyl group from 5-methyltetrahydrofolate to homocysteine resulting in methionine formation. In Escherichia coli O1:K1 / APEC, this protein is 5-methyltetrahydropteroyltriglutamate--homocysteine methyltransferase.